Here is a 30-residue protein sequence, read N- to C-terminus: Dermaseptin-3.1TR (30 aa).

In terms of tissue distribution, expressed by the skin glands.

The protein resides in the secreted. In terms of biological role, has antimicrobial activity. The protein is Dermaseptin-3.1TR of Phyllomedusa trinitatis (Trinidad leaf frog).